The chain runs to 362 residues: Adenosine deaminase (362 aa).

Residues H19 and H21 each contribute to the Zn(2+) site. H21, D23, and G181 together coordinate substrate. Residue H208 participates in Zn(2+) binding. E211 functions as the Proton donor in the catalytic mechanism. D300 is a Zn(2+) binding site.

The protein belongs to the metallo-dependent hydrolases superfamily. Adenosine and AMP deaminases family. Adenosine deaminase subfamily. Zn(2+) is required as a cofactor.

It catalyses the reaction adenosine + H2O + H(+) = inosine + NH4(+). The enzyme catalyses 2'-deoxyadenosine + H2O + H(+) = 2'-deoxyinosine + NH4(+). In terms of biological role, catalyzes the hydrolytic deamination of adenosine and 2-deoxyadenosine. The polypeptide is Adenosine deaminase (Mycobacterium sp. (strain MCS)).